We begin with the raw amino-acid sequence, 783 residues long: Protein SCARECROW (783 aa).

The tract at residues 298-387 (QPQSQDAITH…QSPPASENTA (90 aa)) is disordered. Low complexity-rich tracts occupy residues 342–353 (PSSLPFVPVPSS) and 372–384 (ESQSQSQSPPASE). Residues 387 to 418 (AAAALIRTESIMRREKEELEQQKKDEEGLHLL) adopt a coiled-coil conformation. In terms of domain architecture, GRAS spans 408-777 (QKKDEEGLHL…LCLLTASAWR (370 aa)). The tract at residues 415–478 (LHLLTLLLQC…LVNSCLGIYA (64 aa)) is leucine repeat I (LRI). Positions 422–426 (LQCAE) match the LxCxE motif motif. A VHIID region spans residues 497-562 (FQVFNGISPF…GGPPLVRLTG (66 aa)). Positions 528 to 532 (VHIID) match the VHIID motif. The leucine repeat II (LRII) stretch occupies residues 572–604 (ATGKRLSDFAQKLGLPFEFFPVADKVGNLDPQR). The segment at 613 to 700 (VAVHWLQHSL…QQLLSREIRN (88 aa)) is PFYRE. The SAW stretch occupies residues 703–777 (AVGGPSRSGE…LCLLTASAWR (75 aa)).

Belongs to the GRAS family.

It is found in the nucleus. Putative transcription factor involved in asymmetric cell division. Required for differentiation of endodermis and graviresponses. In Ipomoea nil (Japanese morning glory), this protein is Protein SCARECROW (SCR).